Reading from the N-terminus, the 451-residue chain is tRNA-2-methylthio-N(6)-dimethylallyladenosine synthase (451 aa).

The 117-residue stretch at 6-122 (RHYHITTFGC…LQDLLEQVFN (117 aa)) folds into the MTTase N-terminal domain. 6 residues coordinate [4Fe-4S] cluster: cysteine 15, cysteine 51, cysteine 85, cysteine 157, cysteine 161, and cysteine 164. The region spanning 143–380 (RDSKITAWVN…NHLVGVKAAD (238 aa)) is the Radical SAM core domain. One can recognise a TRAM domain in the interval 383 to 447 (QRYMGRIEEV…PFSLTGEVKE (65 aa)).

This sequence belongs to the methylthiotransferase family. MiaB subfamily. In terms of assembly, monomer. [4Fe-4S] cluster serves as cofactor.

The protein localises to the cytoplasm. It carries out the reaction N(6)-dimethylallyladenosine(37) in tRNA + (sulfur carrier)-SH + AH2 + 2 S-adenosyl-L-methionine = 2-methylsulfanyl-N(6)-dimethylallyladenosine(37) in tRNA + (sulfur carrier)-H + 5'-deoxyadenosine + L-methionine + A + S-adenosyl-L-homocysteine + 2 H(+). Its function is as follows. Catalyzes the methylthiolation of N6-(dimethylallyl)adenosine (i(6)A), leading to the formation of 2-methylthio-N6-(dimethylallyl)adenosine (ms(2)i(6)A) at position 37 in tRNAs that read codons beginning with uridine. The protein is tRNA-2-methylthio-N(6)-dimethylallyladenosine synthase of Trichodesmium erythraeum (strain IMS101).